The primary structure comprises 400 residues: Nicotinate phosphoribosyltransferase (400 aa).

His-220 carries the phosphohistidine; by autocatalysis modification.

This sequence belongs to the NAPRTase family. Transiently phosphorylated on a His residue during the reaction cycle. Phosphorylation strongly increases the affinity for substrates and increases the rate of nicotinate D-ribonucleotide production. Dephosphorylation regenerates the low-affinity form of the enzyme, leading to product release.

It carries out the reaction nicotinate + 5-phospho-alpha-D-ribose 1-diphosphate + ATP + H2O = nicotinate beta-D-ribonucleotide + ADP + phosphate + diphosphate. Its pathway is cofactor biosynthesis; NAD(+) biosynthesis; nicotinate D-ribonucleotide from nicotinate: step 1/1. In terms of biological role, catalyzes the synthesis of beta-nicotinate D-ribonucleotide from nicotinate and 5-phospho-D-ribose 1-phosphate at the expense of ATP. This is Nicotinate phosphoribosyltransferase from Salmonella typhimurium (strain LT2 / SGSC1412 / ATCC 700720).